Reading from the N-terminus, the 180-residue chain is Aspartate 1-decarboxylase (180 aa).

The active-site Schiff-base intermediate with substrate; via pyruvic acid is Ser24. The residue at position 24 (Ser24) is a Pyruvic acid (Ser). Substrate is bound at residue Thr56. Catalysis depends on Tyr57, which acts as the Proton donor. Residue 72 to 74 (GAA) participates in substrate binding.

Belongs to the PanD family. As to quaternary structure, heterooctamer of four alpha and four beta subunits. Pyruvate serves as cofactor. Is synthesized initially as an inactive proenzyme, which is activated by self-cleavage at a specific serine bond to produce a beta-subunit with a hydroxyl group at its C-terminus and an alpha-subunit with a pyruvoyl group at its N-terminus.

The protein resides in the cytoplasm. The catalysed reaction is L-aspartate + H(+) = beta-alanine + CO2. It functions in the pathway cofactor biosynthesis; (R)-pantothenate biosynthesis; beta-alanine from L-aspartate: step 1/1. Its function is as follows. Catalyzes the pyruvoyl-dependent decarboxylation of aspartate to produce beta-alanine. This is Aspartate 1-decarboxylase from Paramagnetospirillum magneticum (strain ATCC 700264 / AMB-1) (Magnetospirillum magneticum).